We begin with the raw amino-acid sequence, 579 residues long: Nuclear receptor coactivator 5 (579 aa).

M1 is modified (N-acetylmethionine). A disordered region spans residues 1-78 (MNTAPSRPSP…LRDHRDSRSV (78 aa)). Residues 1–158 (MNTAPSRPSP…RDSFDGRGPP (158 aa)) are transcription repression. T3 is subject to Phosphothreonine. Phosphoserine is present on residues S9, S21, S24, S29, and S34. Basic and acidic residues-rich tracts occupy residues 11-62 (TRRD…DLRD) and 68-78 (DLRDHRDSRSV). Residues S96, S116, S126, S143, and S151 each carry the phosphoserine modification. The tract at residues 148–173 (YRDSFDGRGPPGPESQSRAKERLKRE) is disordered. Basic and acidic residues predominate over residues 164 to 173 (SRAKERLKRE). Residue T274 is modified to Phosphothreonine. Positions 345-349 (LINLL) match the LXXLL motif motif. Disordered stretches follow at residues 375 to 428 (MRSS…PTSQ), 444 to 537 (VTAN…NFDN), and 560 to 579 (QTTAQMGQPQAPMGSYQRHY). S378 carries the phosphoserine modification. Phosphothreonine is present on T379. Position 381 is a phosphoserine (S381). The segment covering 395 to 413 (SGASLKTQPSSQPLQSGQV) has biased composition (polar residues). Residues 446–457 (ANSSSASPSVAA) show a composition bias toward low complexity. The tract at residues 458–579 (GNTPNQNFST…APMGSYQRHY (122 aa)) is transcription activation. Composition is skewed to polar residues over residues 459–485 (NTPNQNFSTAANSQPQQRSQASGNQPP) and 520–537 (SNMTSQRPVSSTGINFDN).

Binds HTATIP2/TIP30. Interacts with YLPM1. Forms a complex with ILF2, ILF3, YLPM1, KHDRBS1, RBMX and PPP1CA. Widely expressed.

The protein localises to the nucleus. Functionally, nuclear receptor coregulator that can have both coactivator and corepressor functions. Interacts with nuclear receptors for steroids (ESR1 and ESR2) independently of the steroid binding domain (AF-2) of the ESR receptors, and with the orphan nuclear receptor NR1D2. Involved in the coactivation of nuclear steroid receptors (ER) as well as the corepression of MYC in response to 17-beta-estradiol (E2). The sequence is that of Nuclear receptor coactivator 5 (NCOA5) from Homo sapiens (Human).